We begin with the raw amino-acid sequence, 322 residues long: MAEFPKVRMRRLRKANLRWMFREARLSPENLITPIFVDENIKEKKPIESMPDYFRIPLEMVDKEVEECLEKDLRSFILFGIPSYKDETGSSAYDQNGVIQKAVRRIKAEFPDAVIVTDVCLCEYTTHGHCGVVKDGEIVNDETLPIIGKTAVSHAESGADIVAPSGMMDGMVKAIREALDAAGFESTPIMSYSAKYASNFYSPFRDAAESGFKFGDRRGYQMDIHNAREAMREIELDVKEGADIIMVKPALPYLDIIRMVRERFDLPLAAYNVSGEYSMIKAAIKNGWLSEEAIYEVLISIKRAGADLIITYHSKEIAEKLQ.

Zn(2+) is bound by residues Cys-120, Cys-122, and Cys-130. Lys-195 functions as the Schiff-base intermediate with substrate in the catalytic mechanism. 5-aminolevulinate-binding residues include Arg-205 and Arg-217. Glu-233 is a Mg(2+) binding site. Lys-248 serves as the catalytic Schiff-base intermediate with substrate. 2 residues coordinate 5-aminolevulinate: Ser-274 and Tyr-312.

The protein belongs to the ALAD family. As to quaternary structure, homooctamer. Requires Zn(2+) as cofactor.

It catalyses the reaction 2 5-aminolevulinate = porphobilinogen + 2 H2O + H(+). It functions in the pathway porphyrin-containing compound metabolism; protoporphyrin-IX biosynthesis; coproporphyrinogen-III from 5-aminolevulinate: step 1/4. Its function is as follows. Catalyzes an early step in the biosynthesis of tetrapyrroles. Binds two molecules of 5-aminolevulinate per subunit, each at a distinct site, and catalyzes their condensation to form porphobilinogen. The polypeptide is Delta-aminolevulinic acid dehydratase (hemB) (Archaeoglobus fulgidus (strain ATCC 49558 / DSM 4304 / JCM 9628 / NBRC 100126 / VC-16)).